The following is a 503-amino-acid chain: Transcription termination/antitermination protein NusA (503 aa).

The S1 motif domain occupies 139–203; it reads GDIINGIVKR…KGPQIFLSRV (65 aa). Positions 308-378 constitute a KH domain; sequence SHKVEVVVSQ…LDVEEVIGQL (71 aa).

Belongs to the NusA family. In terms of assembly, monomer. Binds directly to the core enzyme of the DNA-dependent RNA polymerase and to nascent RNA.

It is found in the cytoplasm. Participates in both transcription termination and antitermination. This chain is Transcription termination/antitermination protein NusA, found in Rickettsia prowazekii (strain Madrid E).